A 409-amino-acid polypeptide reads, in one-letter code: Serine/threonine transporter SstT (409 aa).

9 consecutive transmembrane segments (helical) span residues 24 to 44, 48 to 68, 82 to 102, 142 to 162, 194 to 214, 218 to 238, 292 to 312, 319 to 339, and 365 to 385; these read LALGIVIGSVSPQLGLAAGLF, FVGALKAVAPVLVFILVAATI, IIVLYLIGTFSAALTAVIAGM, AIANANYIGILAWALVLGAAL, LGIFGLVSSTIAETGFGALAG, LLAVLLGCMAFIALAVNPAIV, IPLGATVNMGGAAITITVLAM, GIQVDFATALLLSLVATVSAC, and VAMQVVAVGFIIGVIQDSAET.

The protein belongs to the dicarboxylate/amino acid:cation symporter (DAACS) (TC 2.A.23) family.

The protein localises to the cell inner membrane. The catalysed reaction is L-serine(in) + Na(+)(in) = L-serine(out) + Na(+)(out). It catalyses the reaction L-threonine(in) + Na(+)(in) = L-threonine(out) + Na(+)(out). Involved in the import of serine and threonine into the cell, with the concomitant import of sodium (symport system). The sequence is that of Serine/threonine transporter SstT from Neisseria gonorrhoeae (strain NCCP11945).